Here is a 150-residue protein sequence, read N- to C-terminus: Transthyretin (150 aa).

The signal sequence occupies residues 1-20 (MGSSSLLLVCLAGMVYLTEA). Sulfocysteine is present on cysteine 33. Residues lysine 38, glutamate 77, and serine 140 each contribute to the L-thyroxine site.

This sequence belongs to the transthyretin family. Homotetramer. Dimer of dimers. In the homotetramer, subunits assemble around a central channel that can accommodate two ligand molecules. Interacts with RBP4. Sulfonation of the reactive cysteine Cys-33 enhances the stability of the native conformation of TTR, avoiding misassembly of the protein leading to amyloid formation. As to expression, detected in choroid plexus (at protein level). Detected in choroid plexus.

The protein resides in the secreted. Thyroid hormone-binding protein. Probably transports thyroxine from the bloodstream to the brain. The chain is Transthyretin (TTR) from Tiliqua rugosa (Shingleback lizard).